The following is a 375-amino-acid chain: E3 ubiquitin-protein ligase FANCL (375 aa).

An N-acetylalanine modification is found at Ala2. The segment at 104–294 (LPPPPQFYSS…KDVLEIDFPA (191 aa)) is UBC-RWD region (URD). Zn(2+)-binding residues include Cys307, Cys310, Cys324, Cys329, His334, Cys337, Cys359, and Cys362. Residues 307–363 (CGICYAYQLDGTIPDQVCDNSQCGQPFHQICLYEWLRGLLTSRQSFNIIFGECPYCS) form an RING-type; degenerate zinc finger.

In terms of assembly, interacts with GGN. Belongs to the multisubunit FA complex composed of FANCA, FANCB, FANCC, FANCE, FANCF, FANCG, FANCL/PHF9 and FANCM. The complex is not found in FA patients. In complex with FANCF, FANCA and FANCG, but not with FANCC, nor FANCE, interacts with HES1; this interaction may be essential for the stability and nuclear localization of FA core complex proteins. Interacts with FANCI. Directly interacts (via the RING-type zinc finger) with UBE2T and UBE2W. In terms of processing, the RING-type zinc finger domain is monoubiquitinated in the presence of UBE2T and UBE2W.

It is found in the cytoplasm. The protein resides in the nucleus. It catalyses the reaction S-ubiquitinyl-[E2 ubiquitin-conjugating enzyme]-L-cysteine + [acceptor protein]-L-lysine = [E2 ubiquitin-conjugating enzyme]-L-cysteine + N(6)-ubiquitinyl-[acceptor protein]-L-lysine.. Its pathway is protein modification; protein ubiquitination. In terms of biological role, ubiquitin ligase protein that mediates monoubiquitination of FANCD2 in the presence of UBE2T, a key step in the DNA damage pathway. Also mediates monoubiquitination of FANCI. May stimulate the ubiquitin release from UBE2W. May be required for proper primordial germ cell proliferation in the embryonic stage, whereas it is probably not needed for spermatogonial proliferation after birth. The polypeptide is E3 ubiquitin-protein ligase FANCL (FANCL) (Homo sapiens (Human)).